A 229-amino-acid polypeptide reads, in one-letter code: E3 ubiquitin-protein ligase RNF114 (229 aa).

Positions 1-23 (MAAAQPESRDGAAQSAKPASETD) are disordered. Residues 30-69 (CPVCLEVFEKPVQVPCGHVFCSACLQECLKPKKPVCGVCR) form an RING-type zinc finger. Residues Cys92 and Cys95 each contribute to the Zn(2+) site. The C2HC RNF-type zinc finger occupies 92-111 (CHGCRKNFILSKIRAHVTSC). Lys103 is modified (N6-acetyllysine). Residues His107 and Cys111 each contribute to the Zn(2+) site. Lys113 bears the N6-acetyllysine mark.

In terms of assembly, interacts with XAF1, the interaction increases XAF1 stability and proapoptotic effects, and may regulate IFN signaling. In terms of processing, autoubiquitinated. Polyubiquitinated in the presence of E2 enzymes UBE2D1, UBE2D2 and UBE2D3, but only monoubiquitinated in the presence of UBE2E1.

The protein resides in the cytoplasm. Its subcellular location is the nucleus. The catalysed reaction is S-ubiquitinyl-[E2 ubiquitin-conjugating enzyme]-L-cysteine + [acceptor protein]-L-lysine = [E2 ubiquitin-conjugating enzyme]-L-cysteine + N(6)-ubiquitinyl-[acceptor protein]-L-lysine.. Its pathway is protein modification; protein ubiquitination. In terms of biological role, E3 ubiquitin-protein ligase that promotes the ubiquitination of various substrates. In turn, participates in the regulation of many biological processes including cell cycle, apoptosis, osteoclastogenesis as well as innate or adaptive immunity. Acts as negative regulator of NF-kappa-B-dependent transcription by promoting the ubiquitination and stabilization of the NF-kappa-B inhibitor TNFAIP3. May promote the ubiquitination of TRAF6 as well. Also acts as a negative regulator of T-cell activation. Inhibits cellular dsRNA responses and interferon production by targeting MAVS component for proteasomal degradation. Ubiquitinates the CDK inhibitor CDKN1A leading to its degradationand probably also CDKN1B and CDKN1C. This activity stimulates cell cycle G1-to-S phase transition and suppresses cellular senescence. May play a role in spermatogenesis. The protein is E3 ubiquitin-protein ligase RNF114 (Rnf114) of Mus musculus (Mouse).